The primary structure comprises 408 residues: Phosphopentomutase (408 aa).

Residues D10, D307, H312, D348, H349, and H360 each coordinate Mn(2+).

Belongs to the phosphopentomutase family. Mn(2+) is required as a cofactor.

The protein resides in the cytoplasm. It catalyses the reaction 2-deoxy-alpha-D-ribose 1-phosphate = 2-deoxy-D-ribose 5-phosphate. The enzyme catalyses alpha-D-ribose 1-phosphate = D-ribose 5-phosphate. It functions in the pathway carbohydrate degradation; 2-deoxy-D-ribose 1-phosphate degradation; D-glyceraldehyde 3-phosphate and acetaldehyde from 2-deoxy-alpha-D-ribose 1-phosphate: step 1/2. Isomerase that catalyzes the conversion of deoxy-ribose 1-phosphate (dRib-1-P) and ribose 1-phosphate (Rib-1-P) to deoxy-ribose 5-phosphate (dRib-5-P) and ribose 5-phosphate (Rib-5-P), respectively. The chain is Phosphopentomutase from Buchnera aphidicola subsp. Baizongia pistaciae (strain Bp).